The primary structure comprises 203 residues: Probable GTP-binding protein EngB (203 aa).

The 174-residue stretch at 22-195 (GIPEIALAGR…WEEIVNQYNQ (174 aa)) folds into the EngB-type G domain. Residues 30–37 (GRSNVGKS), 57–61 (GKTRT), 75–78 (DLPG), 142–145 (TKAD), and 174–176 (VSS) each bind GTP. Mg(2+) is bound by residues serine 37 and threonine 59.

The protein belongs to the TRAFAC class TrmE-Era-EngA-EngB-Septin-like GTPase superfamily. EngB GTPase family. The cofactor is Mg(2+).

In terms of biological role, necessary for normal cell division and for the maintenance of normal septation. The chain is Probable GTP-binding protein EngB from Clostridioides difficile (strain 630) (Peptoclostridium difficile).